The following is a 274-amino-acid chain: Large ribosomal subunit protein uL2cz/uL2cy (274 aa).

Disordered regions lie at residues 1-21 (MAIH…VDSQ) and 225-254 (PVDH…PALG).

It belongs to the universal ribosomal protein uL2 family. As to quaternary structure, part of the 50S ribosomal subunit.

Its subcellular location is the plastid. The protein resides in the chloroplast. The sequence is that of Large ribosomal subunit protein uL2cz/uL2cy (rpl2-A) from Draba nemorosa (Woodland whitlowgrass).